Consider the following 546-residue polypeptide: E3 ubiquitin-protein ligase NEURL1B (546 aa).

Residues 38 to 194 form the NHR 1 domain; the sequence is APRFHAQAKG…ITDEVQLLES (157 aa). At Thr199 the chain carries Phosphothreonine. Residues 270 to 424 enclose the NHR 2 domain; it reads ELRFHATRGP…GVAGQLRLLG (155 aa). Positions 429-490 are disordered; that stretch reads SSETMTPSGS…FSAPEPTGSR (62 aa). Low complexity predominate over residues 457-471; the sequence is SSSASESSLVTAPSS. The RING-type zinc-finger motif lies at 494-534; it reads CTVCFDSEVDTVIYTCGHMCLCHGCGLRLRRQARACCPICR.

Interacts with DLL1 and DLL4. Expressed in the limb buds and dorsal root ganglia. Expressed in brain and kidney and at low levels in the heart.

The protein resides in the cytoplasm. The enzyme catalyses S-ubiquitinyl-[E2 ubiquitin-conjugating enzyme]-L-cysteine + [acceptor protein]-L-lysine = [E2 ubiquitin-conjugating enzyme]-L-cysteine + N(6)-ubiquitinyl-[acceptor protein]-L-lysine.. The protein operates within protein modification; protein ubiquitination. E3 ubiquitin-protein ligase involved in regulation of the Notch pathway through influencing the stability and activity of several Notch ligands. The chain is E3 ubiquitin-protein ligase NEURL1B (Neurl1b) from Mus musculus (Mouse).